A 185-amino-acid chain; its full sequence is Ribosome-recycling factor (185 aa).

It belongs to the RRF family.

The protein localises to the cytoplasm. Responsible for the release of ribosomes from messenger RNA at the termination of protein biosynthesis. May increase the efficiency of translation by recycling ribosomes from one round of translation to another. The protein is Ribosome-recycling factor of Clostridium perfringens (strain ATCC 13124 / DSM 756 / JCM 1290 / NCIMB 6125 / NCTC 8237 / Type A).